A 197-amino-acid chain; its full sequence is Small ribosomal subunit protein uS4A (197 aa).

The S4 RNA-binding domain maps to 107–181 (RRLQTQVYKL…VARRNAARKA (75 aa)). The tract at residues 160 to 197 (PTSPFGGARPGRVARRNAARKAEASGEAADEADEADEE) is disordered. Lys-180 participates in a covalent cross-link: Glycyl lysine isopeptide (Lys-Gly) (interchain with G-Cter in ubiquitin). The residue at position 184 (Ser-184) is a Phosphoserine. Acidic residues predominate over residues 187 to 197 (AADEADEADEE).

Belongs to the universal ribosomal protein uS4 family. Component of the small ribosomal subunit (SSU). Mature yeast ribosomes consist of a small (40S) and a large (60S) subunit. The 40S small subunit contains 1 molecule of ribosomal RNA (18S rRNA) and 33 different proteins (encoded by 57 genes). The large 60S subunit contains 3 rRNA molecules (25S, 5.8S and 5S rRNA) and 46 different proteins (encoded by 81 genes). Interacts with snoRNA U3. uS11 interacts with MPP10. Component of the ribosomal small subunit (SSU) processome composed of at least 40 protein subunits and snoRNA U3.

It is found in the cytoplasm. It localises to the nucleus. The protein localises to the nucleolus. Component of the ribosome, a large ribonucleoprotein complex responsible for the synthesis of proteins in the cell. The small ribosomal subunit (SSU) binds messenger RNAs (mRNAs) and translates the encoded message by selecting cognate aminoacyl-transfer RNA (tRNA) molecules. The large subunit (LSU) contains the ribosomal catalytic site termed the peptidyl transferase center (PTC), which catalyzes the formation of peptide bonds, thereby polymerizing the amino acids delivered by tRNAs into a polypeptide chain. The nascent polypeptides leave the ribosome through a tunnel in the LSU and interact with protein factors that function in enzymatic processing, targeting, and the membrane insertion of nascent chains at the exit of the ribosomal tunnel. uS4 is involved in nucleolar processing of pre-18S ribosomal RNA and ribosome assembly. In Saccharomyces cerevisiae (strain ATCC 204508 / S288c) (Baker's yeast), this protein is Small ribosomal subunit protein uS4A.